The following is a 509-amino-acid chain: Cobyric acid synthase (509 aa).

The GATase cobBQ-type domain occupies 262-459 (EIKVGIIKLP…IHGIFENDSW (198 aa)). Residue Cys343 is the Nucleophile of the active site. The active site involves His451.

Belongs to the CobB/CobQ family. CobQ subfamily.

Its pathway is cofactor biosynthesis; adenosylcobalamin biosynthesis. Its function is as follows. Catalyzes amidations at positions B, D, E, and G on adenosylcobyrinic A,C-diamide. NH(2) groups are provided by glutamine, and one molecule of ATP is hydrogenolyzed for each amidation. The polypeptide is Cobyric acid synthase (Prochlorococcus marinus (strain MIT 9215)).